Consider the following 472-residue polypeptide: tRNA-2-methylthio-N(6)-dimethylallyladenosine synthase (472 aa).

A disordered region spans residues 1–24 (MTGTPDVFPPATPGGAPLVALPAG). In terms of domain architecture, MTTase N-terminal spans 33-150 (GKLYIKTHGC…LPELIRARRE (118 aa)). Residues Cys42, Cys79, Cys113, Cys187, Cys191, and Cys194 each coordinate [4Fe-4S] cluster. The Radical SAM core domain occupies 173–407 (RAEGASAFVS…RINAHAAGIS (235 aa)). The 64-residue stretch at 408-471 (EKMVGTVQTV…TNSLRARVVA (64 aa)) folds into the TRAM domain.

The protein belongs to the methylthiotransferase family. MiaB subfamily. In terms of assembly, monomer. The cofactor is [4Fe-4S] cluster.

The protein localises to the cytoplasm. It carries out the reaction N(6)-dimethylallyladenosine(37) in tRNA + (sulfur carrier)-SH + AH2 + 2 S-adenosyl-L-methionine = 2-methylsulfanyl-N(6)-dimethylallyladenosine(37) in tRNA + (sulfur carrier)-H + 5'-deoxyadenosine + L-methionine + A + S-adenosyl-L-homocysteine + 2 H(+). Catalyzes the methylthiolation of N6-(dimethylallyl)adenosine (i(6)A), leading to the formation of 2-methylthio-N6-(dimethylallyl)adenosine (ms(2)i(6)A) at position 37 in tRNAs that read codons beginning with uridine. The protein is tRNA-2-methylthio-N(6)-dimethylallyladenosine synthase of Stenotrophomonas maltophilia (strain K279a).